The primary structure comprises 292 residues: 31 kDa ribonucleoprotein, chloroplastic (292 aa).

An RRM 1 domain is found at 88-166 (LKLFVGNLPF…RAIRVNAGPA (79 aa)). The disordered stretch occupies residues 165–203 (PAPAKRENSSFGGGRGGNSSYGGGRDGNSSFGGARGGRS). Positions 167–207 (PAKRENSSFGGGRGGNSSYGGGRDGNSSFGGARGGRSVDSS) are linker (Gly-rich). The segment covering 175–190 (FGGGRGGNSSYGGGRD) has biased composition (gly residues). One can recognise an RRM 2 domain in the interval 208 to 286 (NRVYVGNLSW…RSIRVSAAEE (79 aa)).

As to expression, expressed at high levels in the leaves and seedlings, and lower levels are seen in the stems and roots.

Its subcellular location is the plastid. It localises to the chloroplast. The chain is 31 kDa ribonucleoprotein, chloroplastic from Nicotiana plumbaginifolia (Leadwort-leaved tobacco).